A 345-amino-acid polypeptide reads, in one-letter code: NADH-ubiquinone oxidoreductase chain 2 (345 aa).

The next 9 helical transmembrane spans lie at 25-45 (HWLL…PLMT), 60-80 (FLTQ…NAWL), 99-119 (TIAI…PEVL), 149-171 (LNTP…GGLN), 178-198 (ILAF…PFSP), 199-219 (QLMI…FLVL), 242-262 (ALSL…GFVP), 282-302 (LALS…IVTL), and 324-344 (LLLS…PLTL).

Belongs to the complex I subunit 2 family. Core subunit of respiratory chain NADH dehydrogenase (Complex I) which is composed of 45 different subunits.

It localises to the mitochondrion inner membrane. The enzyme catalyses a ubiquinone + NADH + 5 H(+)(in) = a ubiquinol + NAD(+) + 4 H(+)(out). Core subunit of the mitochondrial membrane respiratory chain NADH dehydrogenase (Complex I) which catalyzes electron transfer from NADH through the respiratory chain, using ubiquinone as an electron acceptor. Essential for the catalytic activity and assembly of complex I. This is NADH-ubiquinone oxidoreductase chain 2 (mt-nd2) from Xenopus laevis (African clawed frog).